A 198-amino-acid chain; its full sequence is Potassium-transporting ATPase KdpC subunit (198 aa).

A helical membrane pass occupies residues 8–28 (ILAVLVFTILCGIIYPVSTTV).

Belongs to the KdpC family. In terms of assembly, the system is composed of three essential subunits: KdpA, KdpB and KdpC.

It is found in the cell membrane. In terms of biological role, part of the high-affinity ATP-driven potassium transport (or Kdp) system, which catalyzes the hydrolysis of ATP coupled with the electrogenic transport of potassium into the cytoplasm. This subunit acts as a catalytic chaperone that increases the ATP-binding affinity of the ATP-hydrolyzing subunit KdpB by the formation of a transient KdpB/KdpC/ATP ternary complex. The chain is Potassium-transporting ATPase KdpC subunit from Clostridium perfringens (strain ATCC 13124 / DSM 756 / JCM 1290 / NCIMB 6125 / NCTC 8237 / Type A).